We begin with the raw amino-acid sequence, 463 residues long: Asparagine--tRNA ligase (463 aa).

The protein belongs to the class-II aminoacyl-tRNA synthetase family. As to quaternary structure, homodimer.

The protein localises to the cytoplasm. It carries out the reaction tRNA(Asn) + L-asparagine + ATP = L-asparaginyl-tRNA(Asn) + AMP + diphosphate + H(+). In Clostridium novyi (strain NT), this protein is Asparagine--tRNA ligase.